A 464-amino-acid chain; its full sequence is Argininosuccinate lyase (464 aa).

It belongs to the lyase 1 family. Argininosuccinate lyase subfamily.

The protein localises to the cytoplasm. It carries out the reaction 2-(N(omega)-L-arginino)succinate = fumarate + L-arginine. Its pathway is amino-acid biosynthesis; L-arginine biosynthesis; L-arginine from L-ornithine and carbamoyl phosphate: step 3/3. The sequence is that of Argininosuccinate lyase from Pseudomonas aeruginosa (strain LESB58).